Reading from the N-terminus, the 367-residue chain is Peptide chain release factor 2 (367 aa).

Gln-251 is modified (N5-methylglutamine).

It belongs to the prokaryotic/mitochondrial release factor family. Post-translationally, methylated by PrmC. Methylation increases the termination efficiency of RF2.

Its subcellular location is the cytoplasm. In terms of biological role, peptide chain release factor 2 directs the termination of translation in response to the peptide chain termination codons UGA and UAA. In Nautilia profundicola (strain ATCC BAA-1463 / DSM 18972 / AmH), this protein is Peptide chain release factor 2.